The primary structure comprises 274 residues: Oxidoreductase stcQ (274 aa).

Belongs to the avfA family.

It participates in mycotoxin biosynthesis; sterigmatocystin biosynthesis. In terms of biological role, oxidoreductase; part of the gene cluster that mediates the biosynthesis of sterigmatocystin (ST), a polyketide-derived furanocoumarin which is part of the most toxic and carcinogenic compounds among the known mycotoxins. The first step in the biosynthesis of sterigmatocystin is the production of hexanoate by the fatty acid synthase (FAS) units stcJ and stcK. The polyketide backbone is assembled by the non-reducing polyketide synthase stcA by condensation of the starter hexanoyl-CoA and 7 malonyl-CoA extender units followed by cyclization and release of norsolorinic acid. Norsolorinic acid is the first stable intermediate in the biosynthesis of sterigmatocystin and is converted into averantin (AVN) by the ketoreductase stcE which reduces the hexanoate ketone to an alcohol. Averantin is then oxidized into 5'-hydroxyaverantin (HAVN) by the cytochrome P450 monooxygenase stcF. 5'-hydroxyaverantin is further converted to 5'-oxyaverantin (OAVN) by the 5'-hydroxyaverantin dehydrogenase stcG. The next step is the conversion of OAVN into averufin (AVF) which is catalyzed by a yet to be identified enzyme. The cytochrome P450 monooxygenase stcB and the flavin-binding monooxygenase stcW are both required for the conversion of averufin to 1-hydroxyversicolorone. The esterase stcI probably catalyzes the formation of versiconal hemiacetal acetate from 1-hydroxyversicolorone. The oxydoreductase stcN then probably catalyzes the biosynthetic step from versiconal to versicolorin B (VERB). The next step is performed by the versicolorin B desaturase stcL to produce versicolorin A (VERA). The ketoreductase stcU and the cytochrome P450 monooxygenase stcS are involved in the conversion of versicolorin A to demethylsterigmatocystin. The Baeyer-Villiger oxidas stcQ and the reductase stcR might be involved in the biosynthetic step from versicolorin A to demethylsterigmatocystin. The final step in the biosynthesis of sterigmatocystin is the methylation of demethylsterigmatocystin catalyzed by the methyltransferase stcP. The polypeptide is Oxidoreductase stcQ (Emericella nidulans (strain FGSC A4 / ATCC 38163 / CBS 112.46 / NRRL 194 / M139) (Aspergillus nidulans)).